We begin with the raw amino-acid sequence, 440 residues long: MAHVTDFKEAGFNTLLEELEWRGLISQSTDRDRLAEALNGEPITYYCGFDPTAASLHIGNLVQLINMRHLQLAGHHPIALVGGATGLIGDPRQSGERTLNPKDVVAGWADRLKNQIGGILDTEGANAVRFVSNYDWTASMTVIDFLRDVGKNFRLGTMLAKDTVARRLNSEEGISFTEFSYQVLQGNDFLHLFDEYHCTLELGGSDQWGNLTSGLDLIHKVRGVDVNVFTSPIITDASGKKFGKSEGNAVWLDATMLSPYKFYQFWINRPDVEMESLLKAFTFLPKAEIERLVEESKTNPGKREAQKTLAWEVTSFVHGEAATQAAIDASGALFGRGGNLEDIDEEMLESVLDGFKVVDENGEHVFPVSKPGDRVIDAAQAAGLFKSASEARRAIKSGGVYLNNNRIEDEEQVLAEADFLAGRFALIRRGKKALGAVENR.

Residue Tyr-46 participates in L-tyrosine binding. Residues 51–60 (PTAASLHIGN) carry the 'HIGH' region motif. Positions 181 and 185 each coordinate L-tyrosine. The short motif at 241–245 (KFGKS) is the 'KMSKS' region element. Lys-244 serves as a coordination point for ATP. Residues 373-439 (DRVIDAAQAA…GKKALGAVEN (67 aa)) enclose the S4 RNA-binding domain.

It belongs to the class-I aminoacyl-tRNA synthetase family. TyrS type 1 subfamily. In terms of assembly, homodimer.

The protein resides in the cytoplasm. It catalyses the reaction tRNA(Tyr) + L-tyrosine + ATP = L-tyrosyl-tRNA(Tyr) + AMP + diphosphate + H(+). Catalyzes the attachment of tyrosine to tRNA(Tyr) in a two-step reaction: tyrosine is first activated by ATP to form Tyr-AMP and then transferred to the acceptor end of tRNA(Tyr). This chain is Tyrosine--tRNA ligase, found in Bifidobacterium longum (strain NCC 2705).